Consider the following 1485-residue polypeptide: Putative E3 ubiquitin-protein ligase LIN-1 (1485 aa).

Positions 337-353 are enriched in acidic residues; sequence EENEDDSDSELENESVD. Disordered stretches follow at residues 337–363 and 384–417; these read EENE…IFSP and NQIP…KRDS. The 76-residue stretch at 510-585 folds into the U-box domain; it reads KPPKDFVCPI…TSWKEQNPEL (76 aa). WD repeat units lie at residues 1204-1241, 1246-1283, 1409-1448, and 1454-1485; these read SSNG…PRVI, EHTK…IKCI, SLST…RVAS, and GHTK…WALD.

Expressed in roots and nodules, and at very low levels in calli and seedling shoots.

It carries out the reaction S-ubiquitinyl-[E2 ubiquitin-conjugating enzyme]-L-cysteine + [acceptor protein]-L-lysine = [E2 ubiquitin-conjugating enzyme]-L-cysteine + N(6)-ubiquitinyl-[acceptor protein]-L-lysine.. It participates in protein modification; protein ubiquitination. Functionally, putative E3 ubiquitin-protein ligase involved in the rhizobial infection process. Plays an important role in the early steps of infection thread formation and in growth and differentiation of nodules. The polypeptide is Putative E3 ubiquitin-protein ligase LIN-1 (Lotus japonicus (Lotus corniculatus var. japonicus)).